We begin with the raw amino-acid sequence, 519 residues long: Membrane-bound glycerophospholipid O-acyltransferase 2 (519 aa).

The next 6 helical transmembrane spans lie at P22–F42, T61–V81, C88–G108, F184–G204, L236–E256, and Y288–F305. Active-site residues include N341 and H372. Transmembrane regions (helical) follow at residues F365 to G385, I415 to L435, and F443 to P463.

It belongs to the membrane-bound acyltransferase family.

The protein resides in the endoplasmic reticulum membrane. It carries out the reaction a 1-acyl-sn-glycero-3-phosphocholine + an acyl-CoA = a 1,2-diacyl-sn-glycero-3-phosphocholine + CoA. The catalysed reaction is a 1-acyl-sn-glycero-3-phosphoethanolamine + an acyl-CoA = a 1,2-diacyl-sn-glycero-3-phosphoethanolamine + CoA. It catalyses the reaction a 1-acyl-sn-glycero-3-phosphate + an acyl-CoA = a 1,2-diacyl-sn-glycero-3-phosphate + CoA. The enzyme catalyses (9Z)-hexadecenoyl-CoA + 1-hexadecanoyl-sn-glycero-3-phosphocholine = 1-hexadecanoyl-2-(9Z-hexadecenoyl)-sn-glycero-3-phosphocholine + CoA. It carries out the reaction 1-hexadecanoyl-sn-glycero-3-phosphoethanolamine + (9Z)-octadecenoyl-CoA = 1-hexadecanoyl-2-(9Z-octadecenoyl)-sn-glycero-3-phosphoethanolamine + CoA. The catalysed reaction is 1-hexadecanoyl-sn-glycero-3-phosphoethanolamine + (9Z)-hexadecenoyl-CoA = 1-hexadecanoyl-2-(9Z)-hexadecenoyl-sn-glycero-3-phosphoethanolamine + CoA. It catalyses the reaction 1-(9Z-octadecenoyl)-sn-glycero-3-phospho-L-serine + hexadecanoyl-CoA = 1-(9Z)-octadecenoyl-2-hexadecanoyl-sn-glycero-3-phosphoserine + CoA. The enzyme catalyses (9Z,12Z)-octadecadienoyl-CoA + 1-hexadecanoyl-sn-glycero-3-phosphocholine = 1-hexadecanoyl-2-(9Z,12Z-octadecadienoyl)-sn-glycero-3-phosphocholine + CoA. It carries out the reaction 1-hexadecanoyl-sn-glycero-3-phosphocholine + (9Z)-octadecenoyl-CoA = 1-hexadecanoyl-2-(9Z-octadecenoyl)-sn-glycero-3-phosphocholine + CoA. The catalysed reaction is 1-hexadecanoyl-sn-glycero-3-phosphate + (9Z)-hexadecenoyl-CoA = 1-hexadecanoyl-2-[(9Z)-hexadec-9-enoyl]-sn-glycero-3-phosphate + CoA. It catalyses the reaction 1-hexadecanoyl-sn-glycero-3-phosphate + (9Z)-octadecenoyl-CoA = 1-hexadecanoyl-2-(9Z-octadecenoyl)-sn-glycero-3-phosphate + CoA. The enzyme catalyses a 1-O-(1Z-alkenyl)-sn-glycero-3-phosphocholine + (9Z)-octadecenoyl-CoA = 1-O-(1Z)-alkenyl-2-(9Z)-octadecenoyl-sn-glycero-3-phosphocholine + CoA. It carries out the reaction a 1-O-(1Z-alkenyl)-sn-glycero-3-phosphoethanolamine + (9Z)-octadecenoyl-CoA = 1-O-(1Z)-alkenyl-2-(9Z)-octadecenoyl-sn-glycero-3-phosphoethanolamine + CoA. The catalysed reaction is 1-octadecanoyl-sn-glycero-3-phosphoethanolamine + (9Z)-octadecenoyl-CoA = 1-octadecanoyl-2-(9Z-octadecenoyl)-sn-glycero-3-phosphoethanolamine + CoA. It catalyses the reaction 1-octadecanoyl-sn-glycero-3-phosphocholine + (9Z)-octadecenoyl-CoA = 1-octadecanoyl-2-(9Z-octadecenoyl)-sn-glycero-3-phosphocholine + CoA. The enzyme catalyses 1-(9Z-octadecenoyl)-sn-glycero-3-phosphoethanolamine + (9Z)-octadecenoyl-CoA = 1,2-di-(9Z-octadecenoyl)-sn-glycero-3-phosphoethanolamine + CoA. The protein operates within lipid metabolism; phospholipid metabolism. With respect to regulation, partially inhibited by thimerosal. In terms of biological role, acyltransferase which catalyzes the transfer of an acyl group from an acyl-CoA to a lysophospholipid leading to the production of a phospholipid and participates in the reacylation step of the phospholipid remodeling pathway also known as the Lands cycle. May catalyze preferentially the acylation of lysophosphatidylethanolamine (1-acyl-sn-glycero-3-phosphoethanolamine or LPE) and lysophosphatidic acid (LPA) and to a lesser extend lysophosphatidylcholine (LPC) and lysophosphatidylserine (LPS). Prefers oleoyl-CoA as the acyl donor. May be involved in chondrocyte differentiation. The polypeptide is Membrane-bound glycerophospholipid O-acyltransferase 2 (Rattus norvegicus (Rat)).